Reading from the N-terminus, the 105-residue chain is Nitrogenase-stabilizing/protective protein NifW (105 aa).

It belongs to the NifW family. As to quaternary structure, homotrimer; associates with NifD.

Functionally, may protect the nitrogenase Fe-Mo protein from oxidative damage. The chain is Nitrogenase-stabilizing/protective protein NifW from Rhodospirillum centenum (strain ATCC 51521 / SW).